A 688-amino-acid polypeptide reads, in one-letter code: Glycine--tRNA ligase beta subunit (688 aa).

This sequence belongs to the class-II aminoacyl-tRNA synthetase family. As to quaternary structure, tetramer of two alpha and two beta subunits.

It is found in the cytoplasm. It catalyses the reaction tRNA(Gly) + glycine + ATP = glycyl-tRNA(Gly) + AMP + diphosphate. This chain is Glycine--tRNA ligase beta subunit, found in Geotalea uraniireducens (strain Rf4) (Geobacter uraniireducens).